We begin with the raw amino-acid sequence, 680 residues long: Dihydroxyacetone phosphate acyltransferase (680 aa).

Serine 12 and serine 17 each carry phosphoserine. The HXXXXD motif signature appears at 162 to 167; sequence HRSYID. Position 643 is an N6-acetyllysine (lysine 643). The short motif at 678–680 is the Microbody targeting signal element; the sequence is AKL.

It belongs to the GPAT/DAPAT family. As to quaternary structure, part of a heterotrimeric complex composed of GNPAT, AGPS and a modified form of GNPAT.

It is found in the peroxisome membrane. The catalysed reaction is dihydroxyacetone phosphate + an acyl-CoA = a 1-acylglycerone 3-phosphate + CoA. The enzyme catalyses dihydroxyacetone phosphate + hexadecanoyl-CoA = 1-hexadecanoylglycerone 3-phosphate + CoA. Its pathway is membrane lipid metabolism; glycerophospholipid metabolism. Its function is as follows. Dihydroxyacetonephosphate acyltransferase catalyzing the first step in the biosynthesis of plasmalogens, a subset of phospholipids that differ from other glycerolipids by having an alkyl chain attached through a vinyl ether linkage at the sn-1 position of the glycerol backbone, and which unique physical properties have an impact on various aspects of cell signaling and membrane biology. The polypeptide is Dihydroxyacetone phosphate acyltransferase (Homo sapiens (Human)).